Reading from the N-terminus, the 1532-residue chain is Multidrug resistance-associated protein 1 (1532 aa).

At 1-33 (MALSSFCSSDGSDPLWDWNVTWHTSNPDFTKCF) the chain is on the extracellular side. N-linked (GlcNAc...) asparagine glycosylation is present at Asn-19. Residues 34–54 (QNTVLTWVPCFYLWSCFPLYF) form a helical membrane-spanning segment. Topologically, residues 55 to 74 (LYLSRHDRGYIQMTHLNKAK) are cytoplasmic. A helical transmembrane segment spans residues 75–95 (TALGFFLWIICWADLFYSFWE). Residues 96–100 (RSQGM) lie on the Extracellular side of the membrane. Residues 101–121 (LLAPVLLVSPTLLGITMLLAT) form a helical membrane-spanning segment. Residues 122–133 (FLIQFERRKGVQ) lie on the Cytoplasmic side of the membrane. A helical membrane pass occupies residues 134 to 154 (SSGIMLTFWLVALLCALAILR). The Extracellular portion of the chain corresponds to 155–172 (SKIISALKKDAQVDMFRD). A helical transmembrane segment spans residues 173 to 193 (SAFYLYFTLVFIQLVLSCFSD). The Cytoplasmic segment spans residues 194–317 (SSPLFSETVR…KDRDPSLFKV (124 aa)). The residue at position 277 (Tyr-277) is a Phosphotyrosine. Ser-290 bears the Phosphoserine mark. The helical transmembrane segment at 318 to 338 (LYKTFGPYFLMSFLYKALHDL) threads the bilayer. The ABC transmembrane type-1 1 domain maps to 326–609 (FLMSFLYKAL…LPMVISSIVQ (284 aa)). Residues 339–364 (MMFAGPEILELIINFVNDREAPDWQG) lie on the Extracellular side of the membrane. Residues 365-385 (YLYTALLFVSACLQTLALHQY) form a helical membrane-spanning segment. Residues 386-441 (FHICFVTGMRIKTAVVGAVYRKALVITNSARKSSTVGEIVNLMSVDAQRFMDLATY) are Cytoplasmic-facing. The chain crosses the membrane as a helical span at residues 442-462 (INMIWSAPLQVTLALYFLWLN). At 463-465 (LGP) the chain is on the extracellular side. Residues 466–486 (SVLAGVAVMILMVPFNAVMAM) form a helical membrane-spanning segment. The Cytoplasmic portion of the chain corresponds to 487-548 (KTKTYQVAHM…VLKKSAYLAA (62 aa)). Lys-504 carries the N6-succinyllysine modification. Residues 549-569 (VGTFTWVCTPFLVALSTFAVF) form a helical membrane-spanning segment. Over 570–591 (VTVDEKNILDAKKAFVSLALFN) the chain is Extracellular. A helical membrane pass occupies residues 592–612 (ILRFPLNILPMVISSIVQASV). Topologically, residues 613–967 (SLKRLRIFLS…VKLSVYWNYM (355 aa)) are cytoplasmic. Positions 645 to 869 (ITVKNATFTW…DGAFAEFVRT (225 aa)) constitute an ABC transporter 1 domain. 679–686 (GQVGCGKS) serves as a coordination point for ATP. A phosphoserine mark is found at Ser-879, Ser-883, Ser-916, and Ser-931. Residues 968-988 (KAIGLCISFLSIFLFLCNHVS) form a helical membrane-spanning segment. In terms of domain architecture, ABC transmembrane type-1 2 spans 975–1257 (SFLSIFLFLC…LVRMSSEMET (283 aa)). The Extracellular portion of the chain corresponds to 989 to 1026 (ALASNYWLSLWTDDRPAVNGTQENRNFRLSVYGALGIL). A helical membrane pass occupies residues 1027 to 1047 (QGVAVFGYSMAVSIGGIFASR). The Cytoplasmic portion of the chain corresponds to 1048–1090 (RLHLDLLQNVLRSPMSFFERTPSGNLVNRFSKELDTVDSMIPQ). A helical membrane pass occupies residues 1091 to 1111 (VIKMFMGSLFSVIGAVIIILL). Position 1112 (Ala-1112) is a topological domain, extracellular. The helical transmembrane segment at 1113–1133 (TPIAAVIIPPLGLVYFFVQRF) threads the bilayer. Over 1134–1204 (YVASSRQLKR…VANRWLAVRL (71 aa)) the chain is Cytoplasmic. A helical membrane pass occupies residues 1205–1225 (ECVGNCIVLFAALFAVISRHS). At 1226–1227 (LS) the chain is on the extracellular side. Residues 1228–1248 (AGLVGLSVSYSLQITAYLNWL) form a helical membrane-spanning segment. Over 1249–1532 (VRMSSEMETN…YSMAKDAGLV (284 aa)) the chain is Cytoplasmic. The ABC transporter 2 domain occupies 1294 to 1528 (VEFRDYCLRY…RGVFYSMAKD (235 aa)). 1328 to 1335 (GRTGAGKS) is a binding site for ATP.

This sequence belongs to the ABC transporter superfamily. ABCC family. Conjugate transporter (TC 3.A.1.208) subfamily. Glycosylated. In terms of tissue distribution, skeletal muscle, brain, heart, spleen, lung and kidney.

It localises to the cell membrane. The protein resides in the basolateral cell membrane. It carries out the reaction ATP + H2O + xenobioticSide 1 = ADP + phosphate + xenobioticSide 2.. The enzyme catalyses an S-substituted glutathione(in) + ATP + H2O = an S-substituted glutathione(out) + ADP + phosphate + H(+). It catalyses the reaction sphing-4-enine 1-phosphate(in) + ATP + H2O = sphing-4-enine 1-phosphate(out) + ADP + phosphate + H(+). The catalysed reaction is leukotriene C4(in) + ATP + H2O = leukotriene C4(out) + ADP + phosphate + H(+). It carries out the reaction 17beta-estradiol 17-O-(beta-D-glucuronate)(in) + ATP + H2O = 17beta-estradiol 17-O-(beta-D-glucuronate)(out) + ADP + phosphate + H(+). The enzyme catalyses daunorubicin(in) + ATP + H2O = daunorubicin(out) + ADP + phosphate + H(+). It catalyses the reaction vincristine(in) + ATP + H2O = vincristine(out) + ADP + phosphate + H(+). The catalysed reaction is 2',3'-cGAMP(in) + ATP + H2O = 2',3'-cGAMP(out) + ADP + phosphate + H(+). It carries out the reaction S-[(2E,6E,10E)-geranylgeranyl]-L-glutathione(in) + ATP + H2O = S-[(2E,6E,10E)-geranylgeranyl]-L-glutathione(out) + ADP + phosphate + H(+). The enzyme catalyses prostaglandin A2-S-(R)-glutathione(in) + ATP + H2O = prostaglandin A2-S-(R)-glutathione(out) + ADP + phosphate + H(+). It catalyses the reaction prostaglandin A2-S-(S)-glutathione(in) + ATP + H2O = prostaglandin A2-S-(S)-glutathione(out) + ADP + phosphate + H(+). MK 571 inhibits sphingosine 1-phosphate and leukotriene C4 export. In terms of biological role, mediates export of organic anions and drugs from the cytoplasm. Mediates ATP-dependent transport of glutathione and glutathione conjugates, leukotriene C4, estradiol-17-beta-o-glucuronide, methotrexate, antiviral drugs and other xenobiotics. Confers resistance to anticancer drugs by decreasing accumulation of drug in cells, and by mediating ATP- and GSH-dependent drug export. Hydrolyzes ATP with low efficiency. Catalyzes the export of sphingosine 1-phosphate from mast cells independently of their degranulation. Participates in inflammatory response by allowing export of leukotriene C4 from leukotriene C4-synthesizing cells. Exports S-geranylgeranyl-glutathione (GGG) in lymphoid cells and stromal compartments of lymphoid organs. ABCC1 (via extracellular transport) with GGT5 (via GGG catabolism) establish GGG gradients within lymphoid tissues to position P2RY8-positive lymphocytes at germinal centers in lymphoid follicles and restrict their chemotactic transmigration from blood vessels to the bone marrow parenchyma. Mediates basolateral export of GSH-conjugated R- and S-prostaglandin A2 diastereomers in polarized epithelial cells. This Rattus norvegicus (Rat) protein is Multidrug resistance-associated protein 1.